A 248-amino-acid chain; its full sequence is Transcription factor bHLH35 (248 aa).

Over residues 37 to 54 (SGSYDSSSPDGAASSPAS) the composition is skewed to low complexity. Positions 37–60 (SGSYDSSSPDGAASSPASKNIVSE) are disordered. Residues 51–100 (SPASKNIVSERNRRQKLNQRLFALRSVVPNITKMDKASIIKDAISYIEGL) form the bHLH domain.

In terms of assembly, homodimer. In terms of tissue distribution, expressed constitutively in roots, leaves, stems, and flowers.

The protein resides in the nucleus. The sequence is that of Transcription factor bHLH35 (BHLH35) from Arabidopsis thaliana (Mouse-ear cress).